We begin with the raw amino-acid sequence, 603 residues long: Isocitrate dehydrogenase kinase/phosphatase (603 aa).

ATP-binding positions include 327 to 333 (APGIKGL) and lysine 348. The active site involves aspartate 383.

It belongs to the AceK family.

The protein localises to the cytoplasm. It catalyses the reaction L-seryl-[isocitrate dehydrogenase] + ATP = O-phospho-L-seryl-[isocitrate dehydrogenase] + ADP + H(+). Its function is as follows. Bifunctional enzyme which can phosphorylate or dephosphorylate isocitrate dehydrogenase (IDH) on a specific serine residue. This is a regulatory mechanism which enables bacteria to bypass the Krebs cycle via the glyoxylate shunt in response to the source of carbon. When bacteria are grown on glucose, IDH is fully active and unphosphorylated, but when grown on acetate or ethanol, the activity of IDH declines drastically concomitant with its phosphorylation. The sequence is that of Isocitrate dehydrogenase kinase/phosphatase from Burkholderia mallei (strain ATCC 23344).